Consider the following 494-residue polypeptide: Ketol-acid reductoisomerase (NADP(+)) (494 aa).

The KARI N-terminal Rossmann domain maps to 14–208 (LDQLGRCRFM…GGHRAGVLES (195 aa)). Residues 45-48 (CGAQ), Arg-68, Arg-76, Ser-78, and 108-110 (DKQ) contribute to the NADP(+) site. The active site involves His-132. An NADP(+)-binding site is contributed by Gly-158. KARI C-terminal knotted domains lie at 209–344 (SFVA…NYPV) and 345–487 (TDVE…MTDM). Mg(2+) is bound by residues Asp-217, Glu-221, Glu-389, and Glu-393. Ser-414 is a substrate binding site.

This sequence belongs to the ketol-acid reductoisomerase family. Requires Mg(2+) as cofactor.

It catalyses the reaction (2R)-2,3-dihydroxy-3-methylbutanoate + NADP(+) = (2S)-2-acetolactate + NADPH + H(+). It carries out the reaction (2R,3R)-2,3-dihydroxy-3-methylpentanoate + NADP(+) = (S)-2-ethyl-2-hydroxy-3-oxobutanoate + NADPH + H(+). Its pathway is amino-acid biosynthesis; L-isoleucine biosynthesis; L-isoleucine from 2-oxobutanoate: step 2/4. It functions in the pathway amino-acid biosynthesis; L-valine biosynthesis; L-valine from pyruvate: step 2/4. Involved in the biosynthesis of branched-chain amino acids (BCAA). Catalyzes an alkyl-migration followed by a ketol-acid reduction of (S)-2-acetolactate (S2AL) to yield (R)-2,3-dihydroxy-isovalerate. In the isomerase reaction, S2AL is rearranged via a Mg-dependent methyl migration to produce 3-hydroxy-3-methyl-2-ketobutyrate (HMKB). In the reductase reaction, this 2-ketoacid undergoes a metal-dependent reduction by NADPH to yield (R)-2,3-dihydroxy-isovalerate. In Photobacterium profundum (strain SS9), this protein is Ketol-acid reductoisomerase (NADP(+)).